Reading from the N-terminus, the 165-residue chain is MKNKVFLIGMPGCGKSTIGELISKELLLKFIDMDIYIEEKTSKTISELFEQGEDYFRDIESEACKEIIKYDNVVIATGGGVVKKGINVETLKNNGLVIFIDRPVEKIISDIDVSRRPLLKNGKERIIGLYKERYDIYNKACHKIVVNDGTIDEVIEEIKKIIINN.

Residue 12 to 17 (GCGKST) participates in ATP binding. A Mg(2+)-binding site is contributed by Ser-16. Asp-34, Arg-57, and Gly-79 together coordinate substrate. Arg-116 is a binding site for ATP. Arg-133 is a binding site for substrate.

The protein belongs to the shikimate kinase family. As to quaternary structure, monomer. Mg(2+) is required as a cofactor.

The protein localises to the cytoplasm. The catalysed reaction is shikimate + ATP = 3-phosphoshikimate + ADP + H(+). Its pathway is metabolic intermediate biosynthesis; chorismate biosynthesis; chorismate from D-erythrose 4-phosphate and phosphoenolpyruvate: step 5/7. In terms of biological role, catalyzes the specific phosphorylation of the 3-hydroxyl group of shikimic acid using ATP as a cosubstrate. This chain is Shikimate kinase, found in Clostridium botulinum (strain Alaska E43 / Type E3).